A 75-amino-acid polypeptide reads, in one-letter code: UPF0352 protein VV1_3121 (75 aa).

It belongs to the UPF0352 family.

The chain is UPF0352 protein VV1_3121 from Vibrio vulnificus (strain CMCP6).